Reading from the N-terminus, the 246-residue chain is Bis(5'-nucleosyl)-tetraphosphatase PrpE [asymmetrical] (246 aa).

This sequence belongs to the PrpE family. Ni(2+) is required as a cofactor.

The enzyme catalyses P(1),P(4)-bis(5'-guanosyl) tetraphosphate + H2O = GMP + GTP + 2 H(+). In terms of biological role, asymmetrically hydrolyzes Ap4p to yield AMP and ATP. This Bacillus cereus (strain ZK / E33L) protein is Bis(5'-nucleosyl)-tetraphosphatase PrpE [asymmetrical].